Reading from the N-terminus, the 292-residue chain is Elongation factor Ts (292 aa).

Residues 79-82 are involved in Mg(2+) ion dislocation from EF-Tu; it reads TDFV.

The protein belongs to the EF-Ts family.

Its subcellular location is the cytoplasm. Associates with the EF-Tu.GDP complex and induces the exchange of GDP to GTP. It remains bound to the aminoacyl-tRNA.EF-Tu.GTP complex up to the GTP hydrolysis stage on the ribosome. The polypeptide is Elongation factor Ts (Mycoplasmoides gallisepticum (strain R(low / passage 15 / clone 2)) (Mycoplasma gallisepticum)).